The following is a 434-amino-acid chain: 4-hydroxy-3-methylbut-2-en-1-yl diphosphate synthase (flavodoxin) (434 aa).

Residues 1 to 15 (MQSEAQSPRSSQICS) show a composition bias toward polar residues. A disordered region spans residues 1–24 (MQSEAQSPRSSQICSTEPVFGGHQ). [4Fe-4S] cluster is bound by residues Cys-322, Cys-325, Cys-368, and Glu-375.

The protein belongs to the IspG family. The cofactor is [4Fe-4S] cluster.

It carries out the reaction (2E)-4-hydroxy-3-methylbut-2-enyl diphosphate + oxidized [flavodoxin] + H2O + 2 H(+) = 2-C-methyl-D-erythritol 2,4-cyclic diphosphate + reduced [flavodoxin]. It functions in the pathway isoprenoid biosynthesis; isopentenyl diphosphate biosynthesis via DXP pathway; isopentenyl diphosphate from 1-deoxy-D-xylulose 5-phosphate: step 5/6. Converts 2C-methyl-D-erythritol 2,4-cyclodiphosphate (ME-2,4cPP) into 1-hydroxy-2-methyl-2-(E)-butenyl 4-diphosphate. The protein is 4-hydroxy-3-methylbut-2-en-1-yl diphosphate synthase (flavodoxin) of Burkholderia ambifaria (strain MC40-6).